The sequence spans 735 residues: Trafficking protein particle complex subunit 12 (735 aa).

2 disordered regions span residues 1 to 204 and 237 to 276; these read MEDA…QPSP and NPGA…PPAS. Over residues 13–22 the composition is skewed to pro residues; it reads PEAPHPPQLA. A compositionally biased stretch (acidic residues) spans 34 to 50; it reads ETIDLGGDEFGSEENET. Residues Ser-109 and Ser-184 each carry the phosphoserine modification. 4 TPR repeats span residues 545 to 578, 580 to 613, 620 to 653, and 654 to 687; these read GRVM…YPEQ, PQLL…TQKL, IMVL…DPRN, and AVAN…DPRH.

In terms of assembly, component of the multisubunit TRAPP (transport protein particle) complex, which includes at least TRAPPC2, TRAPPC2L, TRAPPC3, TRAPPC3L, TRAPPC4, TRAPPC5, TRAPPC8, TRAPPC9, TRAPPC10, TRAPPC11 and TRAPPC12. Interacts with CENPE. Post-translationally, phosphorylated as the cells enter mitosis but is dephosphorylated at or before the onset of anaphase. The phosphorylated form recruits CENPE to kinetochores more efficiently than the non-phosphorylated form.

It localises to the endoplasmic reticulum-Golgi intermediate compartment. It is found in the nucleus. In terms of biological role, component of the TRAPP complex, which is involved in endoplasmic reticulum to Golgi apparatus trafficking at a very early stage. Also plays a role in chromosome congression, kinetochore assembly and stability and controls the recruitment of CENPE to the kinetochores. The protein is Trafficking protein particle complex subunit 12 of Homo sapiens (Human).